The primary structure comprises 137 residues: Methylglyoxal synthase (137 aa).

Residues 1–137 enclose the MGS-like domain; that stretch reads MNIALVAHDK…KLSHNDEPPA (137 aa). Substrate is bound by residues histidine 8, lysine 12, 34-37, and 54-55; these read TGTT and SG. Aspartate 60 acts as the Proton donor/acceptor in catalysis. Substrate is bound at residue histidine 87.

This sequence belongs to the methylglyoxal synthase family.

The enzyme catalyses dihydroxyacetone phosphate = methylglyoxal + phosphate. Catalyzes the formation of methylglyoxal from dihydroxyacetone phosphate. The chain is Methylglyoxal synthase from Exiguobacterium sp. (strain ATCC BAA-1283 / AT1b).